The chain runs to 410 residues: Phosphoserine phosphatase (410 aa).

One can recognise an ACT domain in the interval 13 to 91 (LVKIFGKDRP…QAEIISGIGD (79 aa)). The active-site Nucleophile is the D187. Residues D187 and D189 each contribute to the Mg(2+) site. D189 functions as the Proton donor in the catalytic mechanism. Substrate-binding positions include E196, R232, 275–276 (SG), and K320. D343 contacts Mg(2+). Residue N346 coordinates substrate.

Belongs to the HAD-like hydrolase superfamily. SerB family. Mg(2+) serves as cofactor.

It catalyses the reaction O-phospho-L-serine + H2O = L-serine + phosphate. It carries out the reaction O-phospho-D-serine + H2O = D-serine + phosphate. It functions in the pathway amino-acid biosynthesis; L-serine biosynthesis; L-serine from 3-phospho-D-glycerate: step 3/3. Its function is as follows. Catalyzes the dephosphorylation of phosphoserine (P-Ser) in vitro. Also catalyzes the dephosphorylation of phosphothreonine (P-Thr) in vitro. This chain is Phosphoserine phosphatase, found in Streptomyces coelicolor (strain ATCC BAA-471 / A3(2) / M145).